Here is a 508-residue protein sequence, read N- to C-terminus: Sugar transport protein 12 (508 aa).

The Cytoplasmic segment spans residues 1 to 22 (MPSVGIVIGDGKKEYPGKLTLY). 12 consecutive transmembrane segments (helical) span residues 23–43 (VTVT…DIGI), 80–100 (VSLT…SLVA), 118–138 (VLFC…MLIV), 141–161 (LLLG…LSEM), 172–192 (IGFQ…NFFF), 201–221 (LSLG…LILP), 294–314 (LTGI…IGFG), 317–337 (AALI…VVSI), 347–367 (FLFL…AAAI), 383–403 (WYAI…AWSW), 426–446 (ITVS…LMML), and 451–471 (FGLF…VYLF). Topologically, residues 472 to 508 (LPETRGVPIEEMNRVWRSHWYWSKFVDAEKNLTKVVI) are cytoplasmic.

It belongs to the major facilitator superfamily. Sugar transporter (TC 2.A.1.1) family.

The protein localises to the membrane. Its function is as follows. Mediates an active uptake of hexoses, probably by sugar/hydrogen symport. The protein is Sugar transport protein 12 (STP12) of Arabidopsis thaliana (Mouse-ear cress).